The sequence spans 158 residues: 2-C-methyl-D-erythritol 2,4-cyclodiphosphate synthase (158 aa).

D8 and H10 together coordinate a divalent metal cation. 4-CDP-2-C-methyl-D-erythritol 2-phosphate-binding positions include 8 to 10 and 34 to 35; these read DAH and HS. A divalent metal cation is bound at residue H42. 4-CDP-2-C-methyl-D-erythritol 2-phosphate contacts are provided by residues 56–58, 132–135, and R142; these read DIG and TTTE.

This sequence belongs to the IspF family. Homotrimer. A divalent metal cation serves as cofactor.

It carries out the reaction 4-CDP-2-C-methyl-D-erythritol 2-phosphate = 2-C-methyl-D-erythritol 2,4-cyclic diphosphate + CMP. It functions in the pathway isoprenoid biosynthesis; isopentenyl diphosphate biosynthesis via DXP pathway; isopentenyl diphosphate from 1-deoxy-D-xylulose 5-phosphate: step 4/6. Involved in the biosynthesis of isopentenyl diphosphate (IPP) and dimethylallyl diphosphate (DMAPP), two major building blocks of isoprenoid compounds. Catalyzes the conversion of 4-diphosphocytidyl-2-C-methyl-D-erythritol 2-phosphate (CDP-ME2P) to 2-C-methyl-D-erythritol 2,4-cyclodiphosphate (ME-CPP) with a corresponding release of cytidine 5-monophosphate (CMP). The chain is 2-C-methyl-D-erythritol 2,4-cyclodiphosphate synthase from Nitrosococcus oceani (strain ATCC 19707 / BCRC 17464 / JCM 30415 / NCIMB 11848 / C-107).